A 214-amino-acid chain; its full sequence is Leucyl/phenylalanyl-tRNA--protein transferase (214 aa).

Belongs to the L/F-transferase family.

The protein resides in the cytoplasm. The enzyme catalyses N-terminal L-lysyl-[protein] + L-leucyl-tRNA(Leu) = N-terminal L-leucyl-L-lysyl-[protein] + tRNA(Leu) + H(+). It carries out the reaction N-terminal L-arginyl-[protein] + L-leucyl-tRNA(Leu) = N-terminal L-leucyl-L-arginyl-[protein] + tRNA(Leu) + H(+). It catalyses the reaction L-phenylalanyl-tRNA(Phe) + an N-terminal L-alpha-aminoacyl-[protein] = an N-terminal L-phenylalanyl-L-alpha-aminoacyl-[protein] + tRNA(Phe). Functions in the N-end rule pathway of protein degradation where it conjugates Leu, Phe and, less efficiently, Met from aminoacyl-tRNAs to the N-termini of proteins containing an N-terminal arginine or lysine. The chain is Leucyl/phenylalanyl-tRNA--protein transferase from Cereibacter sphaeroides (strain KD131 / KCTC 12085) (Rhodobacter sphaeroides).